Consider the following 328-residue polypeptide: PDZ and LIM domain protein 1 (328 aa).

Position 2 is an N-acetylthreonine (Thr-2). The region spanning 3–85 is the PDZ domain; that stretch reads TLQIVLQGPG…NMTLTVARSE (83 aa). A phosphoserine mark is found at Ser-90 and Ser-130. Residue Tyr-144 is modified to Phosphotyrosine. The LIM zinc-binding domain maps to 257-316; sequence PMCDKCGTGIVGVFVKLRERHRHPECYVCTDCGTNLKQKGHFFVEDQIYCEKHARERVTP. Residues Cys-259, Cys-262, His-279, Cys-282, Cys-285, Cys-288, Cys-306, and His-309 each coordinate Zn(2+). At Thr-315 the chain carries Phosphothreonine. Position 320 is a phosphotyrosine (Tyr-320).

Interacts with ACTN1, ACTN2 and ACTN4. Interacts with PDLIM4.

It localises to the cytoplasm. It is found in the cytoskeleton. The protein localises to the myofibril. Its subcellular location is the sarcomere. The protein resides in the z line. Functionally, cytoskeletal protein that may act as an adapter that brings other proteins (like kinases) to the cytoskeleton. Involved in assembly, disassembly and directioning of stress fibers in fibroblasts. Required for the localization of ACTN1 and PALLD to stress fibers. Required for cell migration and in maintaining cell polarity of fibroblasts. This Bos taurus (Bovine) protein is PDZ and LIM domain protein 1 (PDLIM1).